A 315-amino-acid polypeptide reads, in one-letter code: ATP synthase gamma chain (315 aa).

It belongs to the ATPase gamma chain family. In terms of assembly, F-type ATPases have 2 components, CF(1) - the catalytic core - and CF(0) - the membrane proton channel. CF(1) has five subunits: alpha(3), beta(3), gamma(1), delta(1), epsilon(1). CF(0) has three main subunits: a, b and c.

It is found in the cellular thylakoid membrane. In terms of biological role, produces ATP from ADP in the presence of a proton gradient across the membrane. The gamma chain is believed to be important in regulating ATPase activity and the flow of protons through the CF(0) complex. In Nostoc punctiforme (strain ATCC 29133 / PCC 73102), this protein is ATP synthase gamma chain.